Here is a 249-residue protein sequence, read N- to C-terminus: 15,16-dihydrobiliverdin:ferredoxin oxidoreductase (249 aa).

It belongs to the HY2 family.

The enzyme catalyses 15,16-dihydrobiliverdin + oxidized 2[4Fe-4S]-[ferredoxin] = biliverdin IXalpha + reduced 2[4Fe-4S]-[ferredoxin] + 2 H(+). Functionally, catalyzes the two-electron reduction of biliverdin IX-alpha at the C15 methine bridge. In Prochlorococcus marinus (strain MIT 9303), this protein is 15,16-dihydrobiliverdin:ferredoxin oxidoreductase.